The primary structure comprises 165 residues: S-(2-succino)cysteine N-acetyltransferase (165 aa).

Positions 3–162 (PRYRLAVERD…ITVYMKKQLR (160 aa)) constitute an N-acetyltransferase domain.

This sequence belongs to the acetyltransferase family.

The enzyme catalyses S-(2-succino)-L-cysteine + acetyl-CoA = N-acetyl-S-(2-succino)-L-cysteine + CoA + H(+). It participates in amino-acid biosynthesis; L-cysteine biosynthesis. Catalyzes the N-acetylation of S-(2-succino)cysteine. Is involved in a S-(2-succino)cysteine (2SC) degradation pathway that allows B.subtilis to grow on 2SC as a sole sulfur source, via its metabolization to cysteine. Moreover, 2SC is a toxic compound in B.subtilis at high exogenous concentrations, and this enzyme relieves 2SC toxicity via N-acetylation. The protein is S-(2-succino)cysteine N-acetyltransferase of Bacillus subtilis (strain 168).